The following is a 139-amino-acid chain: Small ribosomal subunit protein bS6 (139 aa).

Basic and acidic residues predominate over residues 95 to 121 (AVTEQSEMLKAEESRNERRERRERPND). The tract at residues 95–139 (AVTEQSEMLKAEESRNERRERRERPNDNAEGADGDDNSDSDNADE) is disordered. The segment covering 124–139 (EGADGDDNSDSDNADE) has biased composition (acidic residues).

The protein belongs to the bacterial ribosomal protein bS6 family.

Functionally, binds together with bS18 to 16S ribosomal RNA. The polypeptide is Small ribosomal subunit protein bS6 (Pseudomonas aeruginosa (strain LESB58)).